A 543-amino-acid chain; its full sequence is MMPTPVILLKEGTDSSQGIPQLVSNISACQVIAEAVRTTLGPRGMDKLIVDGRGKATISNDGATILKLLDVVHPAAKTLVDIAKSQDAEVGDGTTSVTLLAAEFLKQVKPYVEEGLHPQIIIRAFRTATQLAVNKIKEIAVTVKKADKVEQRKLLEKCAMTALSSKLISQQKAFFAKMVVDAVMMLDDLLQLKMIGIKKVQGGALEDSQLVAGVAFKKTFSYAGFEMQPKKYHNPKVALLNVELELKAEKDNAEIRVHTVEDYQAIVDAEWNILYDKLEKIHHSGAKVVLSKLPIGDVATQYFADRDMFCAGRVPEEDLKRTMMACGGSIQTSVNALSADVLGRCQVFEETQIGGERYNFFTGCPKAKTCTFILRGGAEQFMEETERSLHDAIMIVRRAIKNDSVVAGGGAIEMELSKYLRDYSRTIPGKQQLLIGAYAKALEIIPRQLCDNAGFDATNILNKLRARHAQGGTWYGVDINNEDIADNFEAFVWEPAMVRINALTAASEAACLIVSVDETIKNPRSTVDAPAAAGRGRGRGRPH.

The residue at position 1 (Met1) is an N-acetylmethionine. Residue Gly41 participates in ADP binding. Position 41 (Gly41) interacts with ATP. Lys67 bears the N6-acetyllysine mark. Asp92 contributes to the Mg(2+) binding site. Residues Gly93, Thr94, Thr95, Ser96, Ser164, and Ser165 each contribute to the ADP site. Gly93 provides a ligand contact to ATP. Ser96 serves as a coordination point for ATP. N6-acetyllysine occurs at positions 250 and 320. Arg398 and Gly409 together coordinate ATP. Gly409 lines the ADP pocket. A Glycyl lysine isopeptide (Lys-Gly) (interchain with G-Cter in SUMO2) cross-link involves residue Lys430. ADP-binding residues include Glu494 and Arg499. Position 499 (Arg499) interacts with ATP. Arg535 is modified (omega-N-methylarginine).

This sequence belongs to the TCP-1 chaperonin family. As to quaternary structure, component of the chaperonin-containing T-complex (TRiC), a hexadecamer composed of two identical back-to-back stacked rings enclosing a protein folding chamber. Each ring is made up of eight different subunits: TCP1/CCT1, CCT2, CCT3, CCT4, CCT5, CCT6A/CCT6, CCT7, CCT8. Interacts with PACRG. Interacts with DLEC1.

The protein resides in the cytoplasm. It catalyses the reaction ATP + H2O = ADP + phosphate + H(+). In terms of biological role, component of the chaperonin-containing T-complex (TRiC), a molecular chaperone complex that assists the folding of actin, tubulin and other proteins upon ATP hydrolysis. The TRiC complex mediates the folding of WRAP53/TCAB1, thereby regulating telomere maintenance. The chain is T-complex protein 1 subunit eta (CCT7) from Pongo abelii (Sumatran orangutan).